The primary structure comprises 464 residues: Soluble pyridine nucleotide transhydrogenase (464 aa).

35-44 (DSRRVVGGNC) lines the FAD pocket.

This sequence belongs to the class-I pyridine nucleotide-disulfide oxidoreductase family. FAD serves as cofactor.

It is found in the cytoplasm. The catalysed reaction is NAD(+) + NADPH = NADH + NADP(+). Conversion of NADPH, generated by peripheral catabolic pathways, to NADH, which can enter the respiratory chain for energy generation. In Pseudomonas paraeruginosa (strain DSM 24068 / PA7) (Pseudomonas aeruginosa (strain PA7)), this protein is Soluble pyridine nucleotide transhydrogenase.